The sequence spans 555 residues: Formate--tetrahydrofolate ligase (555 aa).

Residue 65 to 72 (TPAGEGKT) participates in ATP binding.

Belongs to the formate--tetrahydrofolate ligase family.

It catalyses the reaction (6S)-5,6,7,8-tetrahydrofolate + formate + ATP = (6R)-10-formyltetrahydrofolate + ADP + phosphate. The protein operates within one-carbon metabolism; tetrahydrofolate interconversion. The polypeptide is Formate--tetrahydrofolate ligase (Thermoanaerobacter pseudethanolicus (strain ATCC 33223 / 39E) (Clostridium thermohydrosulfuricum)).